The sequence spans 78 residues: RNA-binding protein KhpA (78 aa).

Residues 29–78 (TIIYELTVAKGDIGKIIGKEGRTIKAIRTLLVSVASRDNVKVSLEIMEER) enclose the KH domain.

The protein belongs to the KhpA RNA-binding protein family.

Its subcellular location is the cytoplasm. Functionally, a probable RNA-binding protein. This is RNA-binding protein KhpA from Chlamydia muridarum (strain MoPn / Nigg).